The chain runs to 138 residues: Small ribosomal subunit protein uS11c (138 aa).

It belongs to the universal ribosomal protein uS11 family. In terms of assembly, part of the 30S ribosomal subunit.

Its subcellular location is the plastid. It is found in the chloroplast. The chain is Small ribosomal subunit protein uS11c from Nandina domestica (Heavenly bamboo).